A 121-amino-acid chain; its full sequence is NAD(P)H-quinone oxidoreductase subunit M (121 aa).

It belongs to the complex I NdhM subunit family. In terms of assembly, NDH-1 can be composed of about 15 different subunits; different subcomplexes with different compositions have been identified which probably have different functions.

Its subcellular location is the cellular thylakoid membrane. The catalysed reaction is a plastoquinone + NADH + (n+1) H(+)(in) = a plastoquinol + NAD(+) + n H(+)(out). The enzyme catalyses a plastoquinone + NADPH + (n+1) H(+)(in) = a plastoquinol + NADP(+) + n H(+)(out). Its function is as follows. NDH-1 shuttles electrons from an unknown electron donor, via FMN and iron-sulfur (Fe-S) centers, to quinones in the respiratory and/or the photosynthetic chain. The immediate electron acceptor for the enzyme in this species is believed to be plastoquinone. Couples the redox reaction to proton translocation, and thus conserves the redox energy in a proton gradient. Cyanobacterial NDH-1 also plays a role in inorganic carbon-concentration. This Nostoc punctiforme (strain ATCC 29133 / PCC 73102) protein is NAD(P)H-quinone oxidoreductase subunit M.